A 1040-amino-acid chain; its full sequence is Vacuolar membrane protease (1040 aa).

Topologically, residues 1–9 (MINPISFRP) are cytoplasmic. The helical transmembrane segment at 10–30 (GPVTFWTTLIYLALLIPIVII) threads the bilayer. The Vacuolar segment spans residues 31–405 (NEEPPAAPKT…SFVLFGLRGM (375 aa)). Residues N48, N117, N120, and N129 are each glycosylated (N-linked (GlcNAc...) asparagine). Residues H186 and D198 each coordinate Zn(2+). The active-site Proton acceptor is E232. Positions 233, 258, and 331 each coordinate Zn(2+). A helical transmembrane segment spans residues 406–426 (FAWSLTLLIATPLILVGITWL). The Cytoplasmic segment spans residues 427 to 436 (LRNLDKDYFF). The chain crosses the membrane as a helical span at residues 437 to 456 (TSTVKTKEHPEYEAVPIGGW). Topologically, residues 457–462 (KGFFRW) are vacuolar. Residues 463 to 483 (AMMVSIFYFSFWMIMRGANFV) traverse the membrane as a helical segment. Residues 484–490 (RPSALHR) are Cytoplasmic-facing. A helical transmembrane segment spans residues 491-511 (GYANLWLFVFGWIVLVAVTAL). At 512–521 (EDRRRIAAGY) the chain is on the vacuolar side. The helical transmembrane segment at 522-542 (IFVFLESAIFLSCLISFVELL) threads the bilayer. Over 543–715 (ALPRKSAYAL…YEHEQDWSGH (173 aa)) the chain is Cytoplasmic. The segment at 563–680 (HSGYQGYRDS…NGTNDRGRTT (118 aa)) is disordered. 2 stretches are compositionally biased toward low complexity: residues 577-594 (SSGA…PSSP) and 616-626 (APSVAAHSSQP). Polar residues predominate over residues 636 to 647 (GRSTSAPIPSTT). A compositionally biased stretch (acidic residues) spans 650-661 (DEDESEDDDDEA). The helical transmembrane segment at 716–736 (LPSWAWFFQFLLLGPFMIILA) threads the bilayer. The Vacuolar portion of the chain corresponds to 737–758 (AQTGLMLTDAVYQTGSDGSKLF). The helical transmembrane segment at 759–779 (TPYLMIFFFTLLLILPLTPFI) threads the bilayer. Residues 780 to 785 (HRVTHH) lie on the Cytoplasmic side of the membrane. A helical transmembrane segment spans residues 786 to 806 (IPVFLLVVFIVTLTYNLIAFP). The Vacuolar portion of the chain corresponds to 807–1040 (FSANNRYKAF…VEGRKAFKIV (234 aa)). N-linked (GlcNAc...) asparagine glycosylation occurs at N900.

The protein belongs to the peptidase M28 family. Zn(2+) is required as a cofactor.

It localises to the vacuole membrane. Its function is as follows. May be involved in vacuolar sorting and osmoregulation. In Sordaria macrospora (strain ATCC MYA-333 / DSM 997 / K(L3346) / K-hell), this protein is Vacuolar membrane protease.